We begin with the raw amino-acid sequence, 56 residues long: Large ribosomal subunit protein bL32 (56 aa).

The tract at residues 1-34 is disordered; that stretch reads MAVQQNKPTRSKRGMRRSHDALTTSTVSVDKASG.

This sequence belongs to the bacterial ribosomal protein bL32 family.

In Sodalis glossinidius (strain morsitans), this protein is Large ribosomal subunit protein bL32.